A 229-amino-acid polypeptide reads, in one-letter code: DNA repair protein RecO (229 aa).

It belongs to the RecO family.

Involved in DNA repair and RecF pathway recombination. The sequence is that of DNA repair protein RecO from Legionella pneumophila (strain Corby).